The following is a 179-amino-acid chain: Large ribosomal subunit protein uL5 (179 aa).

This sequence belongs to the universal ribosomal protein uL5 family. In terms of assembly, part of the 50S ribosomal subunit; part of the 5S rRNA/L5/L18/L25 subcomplex. Contacts the 5S rRNA and the P site tRNA. Forms a bridge to the 30S subunit in the 70S ribosome.

In terms of biological role, this is one of the proteins that bind and probably mediate the attachment of the 5S RNA into the large ribosomal subunit, where it forms part of the central protuberance. In the 70S ribosome it contacts protein S13 of the 30S subunit (bridge B1b), connecting the 2 subunits; this bridge is implicated in subunit movement. Contacts the P site tRNA; the 5S rRNA and some of its associated proteins might help stabilize positioning of ribosome-bound tRNAs. This chain is Large ribosomal subunit protein uL5, found in Carboxydothermus hydrogenoformans (strain ATCC BAA-161 / DSM 6008 / Z-2901).